The sequence spans 1297 residues: Outer capsid protein VP1 (1297 aa).

The protein belongs to the aquareoviridae outer capsid VP1 protein family.

The protein localises to the virion. It catalyses the reaction a 5'-end diphospho-ribonucleoside in mRNA + GTP + H(+) = a 5'-end (5'-triphosphoguanosine)-ribonucleoside in mRNA + diphosphate. It carries out the reaction a 5'-end (5'-triphosphoguanosine)-ribonucleoside in mRNA + S-adenosyl-L-methionine = a 5'-end (N(7)-methyl 5'-triphosphoguanosine)-ribonucleoside in mRNA + S-adenosyl-L-homocysteine. In terms of biological role, outer capsid protein involved in mRNA capping. Catalyzes the last 3 enzymatic activities for formation of the 5' cap structure on the viral plus-strand transcripts, namely the RNA guanylyltransferase, RNA-7N- and RNA-2'O-methyltransferase activities. The sequence is that of Outer capsid protein VP1 (S1) from Oncorhynchus keta (Chum salmon).